We begin with the raw amino-acid sequence, 64 residues long: U-poneritoxin(01)-Om1a (64 aa).

A signal peptide spans 1–27; the sequence is MKPSGLTFAFLVVFMMAIMYNSVQVTA. The propeptide occupies 28-45; sequence DADADAEAEALANALAEA. Met-62 carries the methionine amide modification.

Truncated sequences of this peptide have also been found in the venom. It is possible they have been cleaved in the venom. As to expression, expressed by the venom gland.

Its subcellular location is the secreted. Functionally, antimicrobial peptide with activities against E.coli (MIC=1.3 uM), S.aureus (MIC=3.1 uM), and S.cerevisiae (MIC=50 uM). Also shows histamine-releasing activity (32.9% at 10 uM). Does not show hemolytic activity, even at 50 uM. It is a short peptide for which no alpha-helical region has been predicted. In Odontomachus monticola (Trap-jaw ant), this protein is U-poneritoxin(01)-Om1a.